The chain runs to 180 residues: Lysine-specific demethylase 5C (180 aa).

A disordered region spans residues 116 to 159; it reads PEESLAYSSDAGEGAGHIPKVQGLLENGDSVTSPEKVATEEGSG. Residue Ser148 is modified to Phosphoserine.

This sequence belongs to the JARID1 histone demethylase family. Part of two distinct complexes, one containing E2F6, and the other containing REST. Interacts with ZMYND8. It depends on Fe(2+) as a cofactor.

The protein localises to the nucleus. The catalysed reaction is N(6),N(6),N(6)-trimethyl-L-lysyl(4)-[histone H3] + 3 2-oxoglutarate + 3 O2 = L-lysyl(4)-[histone H3] + 3 formaldehyde + 3 succinate + 3 CO2. Functionally, histone demethylase that specifically demethylates 'Lys-4' of histone H3, thereby playing a central role in histone code. Does not demethylate histone H3 'Lys-9', H3 'Lys-27', H3 'Lys-36', H3 'Lys-79' or H4 'Lys-20'. Demethylates trimethylated and dimethylated but not monomethylated H3 'Lys-4'. Participates in transcriptional repression of neuronal genes by recruiting histone deacetylases and REST at neuron-restrictive silencer elements. Represses the CLOCK-BMAL1 heterodimer-mediated transcriptional activation of the core clock component PER2. This Cricetulus griseus (Chinese hamster) protein is Lysine-specific demethylase 5C (KDM5C).